The chain runs to 325 residues: Germination protease (325 aa).

Positions 1–7 are excised as a propeptide; that stretch reads MYNVRTD.

This sequence belongs to the peptidase A25 family. As to quaternary structure, homotetramer. In terms of processing, autoproteolytically processed. The inactive tetrameric zymogen termed p46 autoprocesses to a smaller form termed p41, which is active only during spore germination.

It catalyses the reaction Endopeptidase action with P4 Glu or Asp, P1 preferably Glu &gt; Asp, P1' hydrophobic and P2' Ala.. Initiates the rapid degradation of small, acid-soluble proteins during spore germination. In Clostridium perfringens (strain ATCC 13124 / DSM 756 / JCM 1290 / NCIMB 6125 / NCTC 8237 / Type A), this protein is Germination protease.